The primary structure comprises 1386 residues: DNA-directed RNA polymerase subunit beta (1386 aa).

This sequence belongs to the RNA polymerase beta chain family. The RNAP catalytic core consists of 2 alpha, 1 beta, 1 beta' and 1 omega subunit. When a sigma factor is associated with the core the holoenzyme is formed, which can initiate transcription.

It catalyses the reaction RNA(n) + a ribonucleoside 5'-triphosphate = RNA(n+1) + diphosphate. Its function is as follows. DNA-dependent RNA polymerase catalyzes the transcription of DNA into RNA using the four ribonucleoside triphosphates as substrates. The chain is DNA-directed RNA polymerase subunit beta from Nitratiruptor sp. (strain SB155-2).